Here is a 461-residue protein sequence, read N- to C-terminus: Tip elongation protein 1 (461 aa).

Residues 22–69 (GEVENRKGVYVGLELLPEFAEFGKNRGVVDGREYFKTKNNEKTGIFVP) enclose the CAP-Gly domain. Phosphoserine occurs at positions 82, 84, 289, 294, and 305. Positions 134–418 (TEKILQKRIE…RMSPAEFELE (285 aa)) form a coiled coil. The span at 278–303 (KANSSTANEKLSHMESSSPTLTNASF) shows a compositional bias: polar residues. A disordered region spans residues 278–323 (KANSSTANEKLSHMESSSPTLTNASFESPKRGKGSNDLPENHPQRR). Threonine 367 carries the post-translational modification Phosphothreonine. The disordered stretch occupies residues 417 to 437 (LETTQEVEENDSDSHDDEETW).

Monomer. Interacts with tea1 and tea2. Interacts with tea4 in the presence of tea1.

The protein localises to the cytoplasm. It is found in the cytoskeleton. Functionally, has a role in stabilizing and targeting the growing tips of the microtubules along the long axis of the cell, directing them to the ends of the cell. Acts as a cargo for tea2. The chain is Tip elongation protein 1 (tip1) from Schizosaccharomyces pombe (strain 972 / ATCC 24843) (Fission yeast).